The primary structure comprises 249 residues: (S)-1-Phenylethanol dehydrogenase (249 aa).

Residues 17-19, Asp-38, 61-63, Asn-89, and Tyr-93 contribute to the NAD(+) site; these read NGI and CDV. Ser-141 is a substrate binding site. The active-site Proton acceptor is Tyr-154. Residues Lys-158, 184 to 187, and Thr-191 contribute to the NAD(+) site; that span reads PSLV.

It belongs to the short-chain dehydrogenases/reductases (SDR) family. Homotetramer.

It catalyses the reaction (S)-1-phenylethanol + NAD(+) = acetophenone + NADH + H(+). Functionally, catalyzes the NAD-dependent stereospecific oxidation of (S)-1-phenylethanol to acetophenone in the degradation of ethylbenzene. The sequence is that of (S)-1-Phenylethanol dehydrogenase (ped) from Aromatoleum aromaticum (strain DSM 19018 / LMG 30748 / EbN1) (Azoarcus sp. (strain EbN1)).